The following is a 684-amino-acid chain: MTRKILVTSALPYANGSIHLGHMVEHIQTDVWVRFQKLRGHECYYCCADDTHGTPVMLAAQKQGIAPEDMIAKVRKEHLADFTGFFIGYDNYYSTHSTENKQFSQDIYRALKANGKIESRVIEQLFDPEKQMFLPDRFVKGECPKCHAQDQYGDNCEVCGTTYSPTELINPYSAVSGAKPELRESEHFFFKLGECADFLKAWTSGNNPHDGKPHLQPEALNKMKEWLGEGEETTLSDWDISRDAPYFGFEIPDAPGKYFYVWLDAPVGYMASFKNLCDRIGIDFDEYFKADSQTEMYHFIGKDILYFHALFWPAMLHFSGHRAPTGVYAHGFLTVDGQKMSKSRGTFITAKSYLEQGLNPEWMRYYIAAKLNGKIEDTDLNLQDFISRVNSDLVGKYVNIAARASGFIAKRFEGRPKDVSGSALLAKLAAESDTIAEQYENREYARALRDIMALADIVNEYVDANKPWELAKQEGQDERLHEVCSELINAFTMLTAYLAPVLPQTAANAARFLNLDAITWKNTRETLGEHAINKYEHLMQRVEQKQVDDLIEANKQSIQTASAPVEEGKYEKVAEQAGFDDFMKIDMRVAKVLNCEAVEGSTKLLKFDLDFGFEKRIIFSGIAASYPNPAELNGRMVIAVANFAPRKMAKFGVSEGMILSAATADGKLKLLDVDAGAQPGDKVG.

Positions 12-22 (PYANGSIHLGH) match the 'HIGH' region motif. Zn(2+) contacts are provided by Cys-143, Cys-146, Cys-156, and Cys-159. The 'KMSKS' region motif lies at 339–343 (KMSKS). Lys-342 is a binding site for ATP. In terms of domain architecture, tRNA-binding spans 581–684 (DFMKIDMRVA…AGAQPGDKVG (104 aa)).

The protein belongs to the class-I aminoacyl-tRNA synthetase family. MetG type 1 subfamily. As to quaternary structure, homodimer. The cofactor is Zn(2+).

It localises to the cytoplasm. It catalyses the reaction tRNA(Met) + L-methionine + ATP = L-methionyl-tRNA(Met) + AMP + diphosphate. Its function is as follows. Is required not only for elongation of protein synthesis but also for the initiation of all mRNA translation through initiator tRNA(fMet) aminoacylation. In Neisseria gonorrhoeae (strain ATCC 700825 / FA 1090), this protein is Methionine--tRNA ligase.